Reading from the N-terminus, the 237-residue chain is Ribonuclease PH (237 aa).

Phosphate contacts are provided by residues R86 and 124–126 (GTR).

This sequence belongs to the RNase PH family. Homohexameric ring arranged as a trimer of dimers.

The enzyme catalyses tRNA(n+1) + phosphate = tRNA(n) + a ribonucleoside 5'-diphosphate. Its function is as follows. Phosphorolytic 3'-5' exoribonuclease that plays an important role in tRNA 3'-end maturation. Removes nucleotide residues following the 3'-CCA terminus of tRNAs; can also add nucleotides to the ends of RNA molecules by using nucleoside diphosphates as substrates, but this may not be physiologically important. Probably plays a role in initiation of 16S rRNA degradation (leading to ribosome degradation) during starvation. The chain is Ribonuclease PH from Methylorubrum extorquens (strain PA1) (Methylobacterium extorquens).